A 141-amino-acid polypeptide reads, in one-letter code: Putative pre-16S rRNA nuclease (141 aa).

Belongs to the YqgF nuclease family.

It is found in the cytoplasm. Its function is as follows. Could be a nuclease involved in processing of the 5'-end of pre-16S rRNA. This chain is Putative pre-16S rRNA nuclease, found in Acetivibrio thermocellus (strain ATCC 27405 / DSM 1237 / JCM 9322 / NBRC 103400 / NCIMB 10682 / NRRL B-4536 / VPI 7372) (Clostridium thermocellum).